A 476-amino-acid polypeptide reads, in one-letter code: Nyctalopin (476 aa).

Residues 1 to 18 (MLILLLHAVVFSLPYTRA) form the signal peptide. The region spanning 19-57 (TEACLRACPAACTCSHVERGCSVRCDRAGLQRVPQEFPC) is the LRRNT domain. LRR repeat units lie at residues 58–79 (EAASIDLDRNGLRILGERAFGT), 82–103 (SLRRLSLRHNNLSFITPGAFKG), 106–128 (RLAELRLAHNGELRYLHVRTFAA), 131–154 (RLRRLDLAACRLFSVPERLLAELP), 155–177 (ALRELTAFDNLFRRVPGALRGLA), 178–199 (NLTHAHFERSRIEAVASGSLLG), 202–223 (RLRSLSLQANRVRAVHAGAFGD), 226–247 (ALEDLLLNDNLLATLPAAAFRG), 250–271 (RLRTLNLGGNALGSVARAWFSD), 274–295 (ELELLYLDRNSITFVEEGAFQN), and 298–319 (GLLALHLNGNRLTVLSWAAFQP). N-linked (GlcNAc...) asparagine glycosylation occurs at N92. N-linked (GlcNAc...) asparagine glycosylation is present at N178. The N-linked (GlcNAc...) asparagine glycan is linked to N295. An LRRCT domain is found at 331–383 (NPWRCDCQLEWLRDWMEGSGRVADVACASPGSVAGQDLSQVVFERSSDGLCVD). Residues N388, N427, N434, and N438 are each glycosylated (N-linked (GlcNAc...) asparagine).

It belongs to the small leucine-rich proteoglycan (SLRP) family. SLRP class IV subfamily. As to expression, expressed abundantly in retina with lower levels in brain, lung, spleen and testis. Not detected in kidney, heart or liver. In the retina, highest expression found in the inner nuclear layer and ganglion cell layer.

It localises to the secreted. The protein resides in the extracellular space. It is found in the extracellular matrix. The polypeptide is Nyctalopin (Nyx) (Mus musculus (Mouse)).